The sequence spans 148 residues: Small ribosomal subunit protein uS13 (148 aa).

Positions 128–148 are disordered; sequence RGQRTKSTGRRGSTIGVRKKK.

This sequence belongs to the universal ribosomal protein uS13 family. Part of the 30S ribosomal subunit. Forms a loose heterodimer with protein S19. Forms two bridges to the 50S subunit in the 70S ribosome.

Located at the top of the head of the 30S subunit, it contacts several helices of the 16S rRNA. In the 70S ribosome it contacts the 23S rRNA (bridge B1a) and protein L5 of the 50S subunit (bridge B1b), connecting the 2 subunits; these bridges are implicated in subunit movement. The chain is Small ribosomal subunit protein uS13 from Methanococcoides burtonii (strain DSM 6242 / NBRC 107633 / OCM 468 / ACE-M).